Here is a 203-residue protein sequence, read N- to C-terminus: Ribosome-binding factor A (203 aa).

A compositionally biased stretch (basic and acidic residues) spans 119 to 141 (LAEVRRDARPAGDEDPYRRPRTV). Residues 119–203 (LAEVRRDARP…SPGGDPTAGR (85 aa)) are disordered. Over residues 142–169 (DEDDEDEDEDLVDEFDEFDRVEELDADA) the composition is skewed to acidic residues.

Belongs to the RbfA family. In terms of assembly, monomer. Binds 30S ribosomal subunits, but not 50S ribosomal subunits or 70S ribosomes.

Its subcellular location is the cytoplasm. In terms of biological role, one of several proteins that assist in the late maturation steps of the functional core of the 30S ribosomal subunit. Associates with free 30S ribosomal subunits (but not with 30S subunits that are part of 70S ribosomes or polysomes). Required for efficient processing of 16S rRNA. May interact with the 5'-terminal helix region of 16S rRNA. This chain is Ribosome-binding factor A, found in Frankia alni (strain DSM 45986 / CECT 9034 / ACN14a).